Here is a 96-residue protein sequence, read N- to C-terminus: Co-chaperonin GroES (96 aa).

It belongs to the GroES chaperonin family. In terms of assembly, heptamer of 7 subunits arranged in a ring. Interacts with the chaperonin GroEL.

The protein localises to the cytoplasm. Its function is as follows. Together with the chaperonin GroEL, plays an essential role in assisting protein folding. The GroEL-GroES system forms a nano-cage that allows encapsulation of the non-native substrate proteins and provides a physical environment optimized to promote and accelerate protein folding. GroES binds to the apical surface of the GroEL ring, thereby capping the opening of the GroEL channel. The protein is Co-chaperonin GroES of Cupriavidus taiwanensis (strain DSM 17343 / BCRC 17206 / CCUG 44338 / CIP 107171 / LMG 19424 / R1) (Ralstonia taiwanensis (strain LMG 19424)).